Reading from the N-terminus, the 432-residue chain is Adenylosuccinate synthetase (432 aa).

GTP is bound by residues Gly-12–Lys-18 and Gly-40–Thr-42. The active-site Proton acceptor is the Asp-13. Residues Asp-13 and Gly-40 each contribute to the Mg(2+) site. IMP is bound by residues Asp-13–Lys-16, Asn-38–His-41, Thr-131, Arg-145, Gln-226, Thr-241, and Arg-305. His-41 acts as the Proton donor in catalysis. Residue Ala-301–Arg-307 coordinates substrate. Residues Arg-307, Lys-333 to Asp-335, and Ser-415 to Gly-417 contribute to the GTP site.

It belongs to the adenylosuccinate synthetase family. As to quaternary structure, homodimer. Requires Mg(2+) as cofactor.

The protein resides in the cytoplasm. The enzyme catalyses IMP + L-aspartate + GTP = N(6)-(1,2-dicarboxyethyl)-AMP + GDP + phosphate + 2 H(+). It participates in purine metabolism; AMP biosynthesis via de novo pathway; AMP from IMP: step 1/2. Plays an important role in the de novo pathway of purine nucleotide biosynthesis. Catalyzes the first committed step in the biosynthesis of AMP from IMP. In Magnetococcus marinus (strain ATCC BAA-1437 / JCM 17883 / MC-1), this protein is Adenylosuccinate synthetase.